Here is a 54-residue protein sequence, read N- to C-terminus: Movement protein p6 (54 aa).

The Lumenal segment spans residues 1–10 (MDCVLRSYLL). The chain crosses the membrane as a helical span at residues 11 to 31 (LAFGFLICLFLFCLVVFIWFV). Over 32-54 (YKQILFRTTAQSNEARHNHSTVV) the chain is Cytoplasmic.

Homodimer; disulfide-linked.

The protein resides in the host rough endoplasmic reticulum membrane. Transports viral genome to neighboring plant cells directly through plasmosdesmata, without any budding. The movement protein allows efficient cell to cell propagation, by bypassing the host cell wall barrier. Two movement proteins, p6, Hsp70h and three structural proteins, CP, CPm, and P64 are essential for cell-cell movement. Also plays a role in virion formation. Together with CPm and p64, encapsidates the 5'-terminal portion of the viral genome. This is Movement protein p6 from Beet yellows virus (isolate Ukraine) (BYV).